The chain runs to 376 residues: MGIEFKRSPRPTLGVEWEIALVDPETRDLAPRAAEILEIVAKNHPEVHLEREFLQNTVELVTGVCDTVPEAVAELSHDLDALKEAADSLGLRLWTSGSHPFSDFRENPVSEKGSYDEIIARTQYWGNQMLIWGIHVHVGISHEDRVWPIINALLTNYPHLLALSASSPAWDGLDTGYASNRTMLYQQLPTAGLPYQFQSWDEWCSYMADQDKSGVINHTGSMHFDIRPASKWGTIEVRVADSTSNLRELSAIVALTHCLVVHYDRMIDAGEELPSLQQWHVSENKWRAARYGLDAEIIISRDTDEAMVQDELRRLVAQLMPLANELGCARELELVLEILERGGGYERQRRVFKETGSWKAAVDLACDELNDLKALD.

The protein belongs to the glutamate--cysteine ligase type 2 family. YbdK subfamily.

It catalyses the reaction L-cysteine + L-glutamate + ATP = gamma-L-glutamyl-L-cysteine + ADP + phosphate + H(+). ATP-dependent carboxylate-amine ligase which exhibits weak glutamate--cysteine ligase activity. In Corynebacterium glutamicum (strain R), this protein is Putative glutamate--cysteine ligase 2.